The following is a 1226-amino-acid chain: Receptor-type tyrosine-protein phosphatase O (1226 aa).

Residues 1–29 (MGHLPRGTLGGRRLLPLLGLFVLLKIVTT) form the signal peptide. The 86-residue stretch at 30 to 115 (FHVAVQDDNN…TKPSRSITVL (86 aa)) folds into the Fibronectin type-III 1 domain. The Extracellular segment spans residues 30 to 832 (FHVAVQDDNN…VTEVNPNVVV (803 aa)). Asn-75, Asn-154, and Asn-227 each carry an N-linked (GlcNAc...) asparagine glycan. The interval 242–305 (EPSGSFPEDS…PNSTDYESTS (64 aa)) is disordered. Basic and acidic residues predominate over residues 260-270 (IGRDRRFHFPE). Positions 277–291 (PSNVSSGSPPSNVSS) are enriched in low complexity. Asn-279 carries N-linked (GlcNAc...) asparagine glycosylation. Over residues 296 to 305 (PNSTDYESTS) the composition is skewed to polar residues. Fibronectin type-III domains are found at residues 339-435 (RTEK…ISPT), 445-541 (KPQH…IVPT), 542-638 (GIKD…TISF), 641-734 (APVA…LEPA), and 735-827 (PPKS…TEVN). Residues Asn-471 and Asn-500 are each glycosylated (N-linked (GlcNAc...) asparagine). N-linked (GlcNAc...) asparagine glycosylation is found at Asn-710, Asn-743, and Asn-800. A helical transmembrane segment spans residues 833-853 (ISVLAILSTLLIGLLLVTLVI). Over 854–1226 (LRKKHLQMAR…DVIYENVSKS (373 aa)) the chain is Cytoplasmic. Ser-875 is modified (phosphoserine). The region spanning 948 to 1205 (FSLQFEELKL…IFIHQCVQLM (258 aa)) is the Tyrosine-protein phosphatase domain. Residues Asp-1112, 1146–1152 (CSAGVGR), and Gln-1190 each bind substrate. The active-site Phosphocysteine intermediate is the Cys-1146. Phosphotyrosine is present on Tyr-1220.

It belongs to the protein-tyrosine phosphatase family. Receptor class 3 subfamily. As to quaternary structure, interacts (phosphorylated form) with FYN and GRB2.

It is found in the membrane. It carries out the reaction O-phospho-L-tyrosyl-[protein] + H2O = L-tyrosyl-[protein] + phosphate. Its function is as follows. Possesses tyrosine phosphatase activity. Plays a role in regulating the glomerular pressure/filtration rate relationship through an effect on podocyte structure and function. This chain is Receptor-type tyrosine-protein phosphatase O (Ptpro), found in Mus musculus (Mouse).